Reading from the N-terminus, the 633-residue chain is Probable potassium transport system protein Kup 2 (633 aa).

12 consecutive transmembrane segments (helical) span residues 18–38 (FLAMTIGAIGVVYGDIGTSPL), 61–81 (LISLMLWTLTIIVTFKYVLFL), 109–129 (LMFMAGILGAALFIGDAMITP), 145–165 (PAFHDYVLPISVGIMVLLFAV), 173–193 (VSIFFGPITLIWFLVLGAAGV), 211–231 (AVTFLWNAGFVGFIVLGAVFL), 255–275 (WFAVVFPALTLNYLGQGALVL), 287–307 (LMFPNWALLPVVLLATAATII), 345–365 (IYLPFVNNALLAGVIVLMFMF), 371–391 (LATAYGISVTGAMVVTTVLAF), 405–425 (ATAVLLPLLVLELFFLGANLF), and 427–447 (IHDGGYVPILIAGTLMTTMWT).

It belongs to the HAK/KUP transporter (TC 2.A.72) family.

It localises to the cell inner membrane. It carries out the reaction K(+)(in) + H(+)(in) = K(+)(out) + H(+)(out). Transport of potassium into the cell. Likely operates as a K(+):H(+) symporter. The sequence is that of Probable potassium transport system protein Kup 2 from Sinorhizobium medicae (strain WSM419) (Ensifer medicae).